The sequence spans 335 residues: Calcium/calmodulin-dependent protein kinase type I (335 aa).

Positions 31–291 (YRVGRVLGGG…AADALKHPFL (261 aa)) constitute a Protein kinase domain. 37–45 (LGGGTYATV) contributes to the ATP binding site. Catalysis depends on aspartate 154, which acts as the Proton acceptor. Residue threonine 192 is modified to Phosphothreonine; by autocatalysis. A calmodulin-binding region spans residues 310-334 (NARKTFRTAYNAVRAFNTWKKLENK).

Belongs to the protein kinase superfamily. CAMK Ser/Thr protein kinase family. CaMK subfamily.

It is found in the cytoplasm. The enzyme catalyses L-seryl-[protein] + ATP = O-phospho-L-seryl-[protein] + ADP + H(+). The catalysed reaction is L-threonyl-[protein] + ATP = O-phospho-L-threonyl-[protein] + ADP + H(+). Its function is as follows. Important in cell cycle regulation. The polypeptide is Calcium/calmodulin-dependent protein kinase type I (cmk1) (Schizosaccharomyces pombe (strain 972 / ATCC 24843) (Fission yeast)).